The sequence spans 291 residues: Porphobilinogen deaminase (291 aa).

At C233 the chain carries S-(dipyrrolylmethanemethyl)cysteine.

Belongs to the HMBS family. As to quaternary structure, monomer. The cofactor is dipyrromethane.

The enzyme catalyses 4 porphobilinogen + H2O = hydroxymethylbilane + 4 NH4(+). Its pathway is porphyrin-containing compound metabolism; protoporphyrin-IX biosynthesis; coproporphyrinogen-III from 5-aminolevulinate: step 2/4. In terms of biological role, tetrapolymerization of the monopyrrole PBG into the hydroxymethylbilane pre-uroporphyrinogen in several discrete steps. In Ruminiclostridium josui (Clostridium josui), this protein is Porphobilinogen deaminase (hemC).